The sequence spans 427 residues: Glutamate-1-semialdehyde 2,1-aminomutase (427 aa).

Lysine 265 carries the N6-(pyridoxal phosphate)lysine modification.

Belongs to the class-III pyridoxal-phosphate-dependent aminotransferase family. HemL subfamily. In terms of assembly, homodimer. Pyridoxal 5'-phosphate serves as cofactor.

It is found in the cytoplasm. The catalysed reaction is (S)-4-amino-5-oxopentanoate = 5-aminolevulinate. The protein operates within porphyrin-containing compound metabolism; protoporphyrin-IX biosynthesis; 5-aminolevulinate from L-glutamyl-tRNA(Glu): step 2/2. The protein is Glutamate-1-semialdehyde 2,1-aminomutase of Pseudomonas syringae pv. syringae (strain B728a).